The following is a 263-amino-acid chain: Ribosomal RNA small subunit methyltransferase A (263 aa).

Residues Asn20, Leu22, Gly47, Glu68, Asp90, and Asn111 each contribute to the S-adenosyl-L-methionine site.

Belongs to the class I-like SAM-binding methyltransferase superfamily. rRNA adenine N(6)-methyltransferase family. RsmA subfamily.

The protein resides in the cytoplasm. It catalyses the reaction adenosine(1518)/adenosine(1519) in 16S rRNA + 4 S-adenosyl-L-methionine = N(6)-dimethyladenosine(1518)/N(6)-dimethyladenosine(1519) in 16S rRNA + 4 S-adenosyl-L-homocysteine + 4 H(+). Its function is as follows. Specifically dimethylates two adjacent adenosines (A1518 and A1519) in the loop of a conserved hairpin near the 3'-end of 16S rRNA in the 30S particle. May play a critical role in biogenesis of 30S subunits. In Chlorobium chlorochromatii (strain CaD3), this protein is Ribosomal RNA small subunit methyltransferase A.